Consider the following 92-residue polypeptide: Small ribosomal subunit protein uS19 (92 aa).

It belongs to the universal ribosomal protein uS19 family.

Its function is as follows. Protein S19 forms a complex with S13 that binds strongly to the 16S ribosomal RNA. The chain is Small ribosomal subunit protein uS19 from Polynucleobacter asymbioticus (strain DSM 18221 / CIP 109841 / QLW-P1DMWA-1) (Polynucleobacter necessarius subsp. asymbioticus).